Here is a 751-residue protein sequence, read N- to C-terminus: WD repeat-containing protein 91 (751 aa).

The stretch at Q183–E205 forms a coiled coil. A disordered region spans residues E237–Q398. Over residues L238 to A267 the composition is skewed to polar residues. The span at T356 to T373 shows a compositional bias: basic and acidic residues. WD repeat units lie at residues E410–A449, I452–E492, S517–Q559, P564–S603, A606–S645, V668–E706, and G713–S751.

It belongs to the WD repeat WDR91 family.

The protein resides in the early endosome membrane. It localises to the late endosome membrane. Its function is as follows. Functions as a negative regulator of the PI3 kinase/PI3K activity associated with endosomal membranes. By modifying the phosphatidylinositol 3-phosphate/PtdInsP3 content of endosomal membranes may regulate endosome fusion, recycling, sorting and early to late endosome transport. The sequence is that of WD repeat-containing protein 91 from Xenopus tropicalis (Western clawed frog).